A 365-amino-acid polypeptide reads, in one-letter code: REVDRVMGLNDRFASYIEKVRFLEQQNKMLVAELNQLRGKEPSRLGDIYQEELRELRRQVDGLNAGKARLEIERDNLASDLATLKQRLQEENALRQEAENNLNTFRQDVDEAALNRVQLERKIDALQDEISFLRKVHEEEMRQLQEQLIAQQVHVDLDVSKPDLTTALKEIRAQFEAMATSNMQETEEWYRSKFADLTDAAGRNAEALRQAKQEANEYRRQIQGLTCDLESLRGSNESLERQLREMEERFAIETAGYQDTVARLEDEIQMLKEEMARHLQEYQDLLNVKLALDIEIATYRKLLEGEESRITVPVQNFTNLQFRDTSLDTKLTPEAHVKRSIVVRTVETRDGEIIKESTTERKDLP.

A head region spans residues 1–5 (REVDR). In terms of domain architecture, IF rod spans 2–310 (EVDRVMGLND…KLLEGEESRI (309 aa)). The coil 1A stretch occupies residues 6–37 (VMGLNDRFASYIEKVRFLEQQNKMLVAELNQL). Residues 38–48 (RGKEPSRLGDI) form a linker 1 region. The segment at 49–147 (YQEELRELRR…EEEMRQLQEQ (99 aa)) is coil 1B. The interval 148–163 (LIAQQVHVDLDVSKPD) is linker 12. The segment at 164–185 (LTTALKEIRAQFEAMATSNMQE) is coil 2A. The interval 186-189 (TEEW) is linker 2. The interval 190-310 (YRSKFADLTD…KLLEGEESRI (121 aa)) is coil 2B. A tail region spans residues 311-365 (TVPVQNFTNLQFRDTSLDTKLTPEAHVKRSIVVRTVETRDGEIIKESTTERKDLP).

This sequence belongs to the intermediate filament family.

The protein is Glial fibrillary acidic protein (gfap) of Carassius auratus (Goldfish).